Consider the following 508-residue polypeptide: MLPLLDSVSLPYLILSACLSVILLRRFLAHDKGGSKSIAQGCLPEPRLRQWDPIFGFGIVISQARALRGHRYLEWLRDLHASMPHTKTFSANYGGYRWIFSIEPEILKAVYATNLQNFGVEPIRQHPPGFQPFAHKGVSTSDGDDWSFSRTLIKPFFERSVYISTDRIKPFADKFMTLLPDDGETFDIQPLLQRWFLDITSEFIFGKSQDSMTHADRAEVTWAMADVLRGGRQRAQTHRILWAFNWDWWFEAVEKVHGFLNPYIRSTLKELEERQQRIKDGLPVDEERTDLLWSMATMLPDEEELRSQVCLIFVPNNDTTSMFIGHCLYFLARNSNAWKRLRDEVDAVGDAPITFEMLRNMKYLNGILNETHRLIPNNVTQVRAALSDVVLPLGGGPNGKAPLDVRKGDIVSVTKTVMYRDPEQWGPDANEYRPERWDGMRGGWHFLPYGGGPRRCPAQMMVQNESAYMLFRLAQKYSTIVARDPEPFRARMRIGPSSMHGVKIAFYK.

Residues 8 to 24 traverse the membrane as a helical segment; it reads VSLPYLILSACLSVILL. Cys-456 serves as a coordination point for heme.

Belongs to the cytochrome P450 family. Heme is required as a cofactor.

The protein localises to the membrane. It functions in the pathway secondary metabolite biosynthesis. In terms of biological role, cytochrome P450 monooxygenase; part of the gene cluster that mediates the biosynthesis of tenellin-type 2-pyridones, iron-chelating compounds involved in iron stress tolerance, competition with the natural competitor fungus Metarhizium robertsii and insect hosts infection. TenA catalyzes an oxidative ring expansion of pretenellin A and 14-hydropretellenin A to form the 2-pyridone core, leading to the production of pretenellin B and pyridovericin, respectively. The pathway begins with the assembly of the polyketide-amino acid backbone by the hybrid PKS-NRPS tenS with the help of the enoyl reductase tenC. These enzymes catalyze the synthesis of the pyrrolidine-2-dione intermediates pretellinin A, 11-hydropretellenin A, 12-hydropretellenin A, 13-hydropretellenin A, 14-hydropretellenin A, 12-oxopretellenin A and prototellinin D. The cytochrome P450 monooxygenase tenA then catalyzes an oxidative ring expansion of pretenellin A and 14-hydropretellenin A to form the 2-pyridone core, leading to pretenellin B and pyridovericin, respectively. The cytochrome P450 monooxygenase tenB is then required for the selective N-hydroxylation of the 2-pyridone nitrogen of yield tellinin and 15-hydroxytellenin (15-HT), respectively. The UDP-glucosyltransferase GT1 and the methyltransferase MT1, located outside the tenS gene cluster, contribute to the stepwise glycosylation and methylation of 15-HT to obtain the glycoside pyridovericin-N-O-(4-O-methyl-beta-D-glucopyranoside) (PMGP). Additional related compounds such as 1-O-methyl-15-HT, (8Z)-1-O-methyl-15-HT, and O-methyltenellin A are also produced but the enzymes involved in their biosynthesis have still to be determined. The chain is Cytochrome P450 monooxygenase tenA from Beauveria bassiana (White muscardine disease fungus).